Here is an 874-residue protein sequence, read N- to C-terminus: Alanine--tRNA ligase (874 aa).

Zn(2+) contacts are provided by histidine 563, histidine 567, cysteine 665, and histidine 669.

Belongs to the class-II aminoacyl-tRNA synthetase family. The cofactor is Zn(2+).

The protein localises to the cytoplasm. It catalyses the reaction tRNA(Ala) + L-alanine + ATP = L-alanyl-tRNA(Ala) + AMP + diphosphate. Catalyzes the attachment of alanine to tRNA(Ala) in a two-step reaction: alanine is first activated by ATP to form Ala-AMP and then transferred to the acceptor end of tRNA(Ala). Also edits incorrectly charged Ser-tRNA(Ala) and Gly-tRNA(Ala) via its editing domain. This is Alanine--tRNA ligase from Haemophilus influenzae (strain ATCC 51907 / DSM 11121 / KW20 / Rd).